The chain runs to 463 residues: Arginine biosynthesis bifunctional protein ArgJ, chloroplastic (463 aa).

Substrate-binding residues include threonine 207, lysine 233, threonine 244, glutamate 331, asparagine 458, and threonine 463. The active-site Nucleophile is threonine 244.

Belongs to the ArgJ family. As to quaternary structure, heterodimer of an alpha and a beta chain.

The protein localises to the plastid. Its subcellular location is the chloroplast. It carries out the reaction N(2)-acetyl-L-ornithine + L-glutamate = N-acetyl-L-glutamate + L-ornithine. The catalysed reaction is L-glutamate + acetyl-CoA = N-acetyl-L-glutamate + CoA + H(+). It functions in the pathway amino-acid biosynthesis; L-arginine biosynthesis; L-ornithine and N-acetyl-L-glutamate from L-glutamate and N(2)-acetyl-L-ornithine (cyclic): step 1/1. The protein operates within amino-acid biosynthesis; L-arginine biosynthesis; N(2)-acetyl-L-ornithine from L-glutamate: step 1/4. In terms of biological role, catalyzes two activities which are involved in the cyclic version of arginine biosynthesis: the synthesis of acetylglutamate from glutamate and acetyl-CoA, and of ornithine by transacetylation between acetylornithine and glutamate. The polypeptide is Arginine biosynthesis bifunctional protein ArgJ, chloroplastic (Oryza sativa subsp. japonica (Rice)).